Reading from the N-terminus, the 229-residue chain is MAEVKNKKASVATPEKETVVVQKDKAAALVKPQFNAQVDKRMLVEEVHQQAIFDSILSERASRRQGTHQVKNRAAVSGSGKKPWKQKGTGRARHSSRRSPIWVGGGRAFGPQSVKNYSLKVNKKVKQLAFRSALTMLVNDKAVLVEDFKMDKISTKDLSQKLKSLNVDKLRHVILVSENATVFKSSANLKNVTTLKAHSLNVETLVRADVLLVENESMKLLTERVLGSN.

The tract at residues 62 to 103 (SRRQGTHQVKNRAAVSGSGKKPWKQKGTGRARHSSRRSPIWV) is disordered. The span at 82 to 97 (KPWKQKGTGRARHSSR) shows a compositional bias: basic residues.

This sequence belongs to the universal ribosomal protein uL4 family. In terms of assembly, part of the 50S ribosomal subunit.

In terms of biological role, one of the primary rRNA binding proteins, this protein initially binds near the 5'-end of the 23S rRNA. It is important during the early stages of 50S assembly. It makes multiple contacts with different domains of the 23S rRNA in the assembled 50S subunit and ribosome. Functionally, forms part of the polypeptide exit tunnel. This is Large ribosomal subunit protein uL4 from Mycoplasmopsis synoviae (strain 53) (Mycoplasma synoviae).